We begin with the raw amino-acid sequence, 241 residues long: ATP synthase subunit a (241 aa).

5 helical membrane passes run 30–50 (GQVF…ISLG), 91–111 (FIGT…LIPW), 128–148 (INTT…AGLS), 193–213 (LVVG…VMFL), and 214–234 (GLFT…YYIG).

The protein belongs to the ATPase A chain family. In terms of assembly, F-type ATPases have 2 components, CF(1) - the catalytic core - and CF(0) - the membrane proton channel. CF(1) has five subunits: alpha(3), beta(3), gamma(1), delta(1), epsilon(1). CF(0) has four main subunits: a, b, b' and c.

Its subcellular location is the cellular thylakoid membrane. Its function is as follows. Key component of the proton channel; it plays a direct role in the translocation of protons across the membrane. This chain is ATP synthase subunit a, found in Prochlorococcus marinus (strain MIT 9215).